Here is a 1337-residue protein sequence, read N- to C-terminus: DNA-directed RNA polymerase subunit beta' (1337 aa).

Residues Cys60, Cys62, Cys75, and Cys78 each contribute to the Zn(2+) site. Residues Asp536, Asp538, and Asp540 each coordinate Mg(2+). Zn(2+)-binding residues include Cys895, Cys974, Cys981, and Cys984.

This sequence belongs to the RNA polymerase beta' chain family. As to quaternary structure, the RNAP catalytic core consists of 2 alpha, 1 beta, 1 beta' and 1 omega subunit. When a sigma factor is associated with the core the holoenzyme is formed, which can initiate transcription. The cofactor is Mg(2+). Zn(2+) is required as a cofactor.

It catalyses the reaction RNA(n) + a ribonucleoside 5'-triphosphate = RNA(n+1) + diphosphate. DNA-dependent RNA polymerase catalyzes the transcription of DNA into RNA using the four ribonucleoside triphosphates as substrates. This is DNA-directed RNA polymerase subunit beta' from Bifidobacterium adolescentis (strain ATCC 15703 / DSM 20083 / NCTC 11814 / E194a).